A 66-amino-acid polypeptide reads, in one-letter code: Large ribosomal subunit protein bL32 (66 aa).

It belongs to the bacterial ribosomal protein bL32 family.

In Rickettsia bellii (strain OSU 85-389), this protein is Large ribosomal subunit protein bL32.